A 645-amino-acid polypeptide reads, in one-letter code: MSEILSSLRSLMASHSPPLDALVVPSEDYHQSEYVSARDKRREFVSGFSGSAGLALITKKEARLWTDGRYFLQALQQLSDEWTLMRMGEDPLVEVWMSDNLPEEANIGVDSWCVSVDTANRWGKSFAKKNQKLITTTTDLVDEVWKSRPPSEMSPVVVHPLEFAGRSVSHKFEDLRAKLKQEGARGLVIAALDEVAWLYNIRGTDVAYCPVVHAFAILTTDSAFLYVDKKKVSDEANSYFNGLGVEVREYTDVISDVALLASDRLISSFASKTVQHEAAKDMEIDSDQPDRLWVDPASCCYALYSKLDAEKVLLQPSPISLSKALKNPVELEGIKNAHVRDGAAVVQYLVWLDNQMQELYGASGYFLEAEASKKKPSETSKLTEVTVSDKLESLRASKEHFRGLSFPTISSVGSNAAVIHYSPEPEACAEMDPDKIYLCDSGAQYLDGTTDITRTVHFGKPSAHEKECYTAVFKGHVALGNARFPKGTNGYTLDILARAPLWKYGLDYRHGTGHGVGSYLCVHEGPHQVSFRPSARNVPLQATMTVTDEPGYYEDGNFGIRLENVLVVNDAETEFNFGDKGYLQFEHITWAPYQVKLIDLDELTREEIDWLNTYHSKCKDILAPFMNQTEMEWLKKATEPVSVSA.

At Ser-2 the chain carries N-acetylserine. The a peptide site is built by Arg-69 and His-420. Asp-440, Asp-451, and His-514 together coordinate Mn(2+). Residues His-514, His-523, and Glu-549 each contribute to the a peptide site. Residues Glu-549 and Glu-563 each contribute to the Mn(2+) site.

This sequence belongs to the peptidase M24B family. In terms of assembly, homodimer. Interacts with N-1-naphthylphthalamic acid (NPA). Requires Mn(2+) as cofactor. Zn(2+) is required as a cofactor. Post-translationally, glycosylated. Also present in a non-glycosylated form. As to expression, ubiquitous with preferential expression in 5 days-old seedlings, roots, flowers, inflorescences and rosette leaves (at protein levels).

The protein localises to the cytoplasm. It localises to the cell membrane. Its subcellular location is the microsome membrane. The enzyme catalyses Release of any N-terminal amino acid, including proline, that is linked to proline, even from a dipeptide or tripeptide.. With respect to regulation, inhibited by EGTA and apstatin, and, to some extent, by the flavonoid kaempferol. In terms of biological role, catalyzes the removal of a penultimate prolyl residue from the N-termini of peptides, such as Arg-Pro-Pro. Aminopeptidase that binds to the auxin transport inhibitor N-1-naphthylphthalamic acid (NPA). May play a negative role in the regulation of PIN auxin transport proteins. The protein is Aminopeptidase P1 of Arabidopsis thaliana (Mouse-ear cress).